The primary structure comprises 343 residues: uncharacterized protein (343 aa).

3 disordered regions span residues 1-25 (MSSK…LSGT), 62-119 (KNIR…DCSD), and 169-188 (NPKI…TKKS). The segment covering 62–71 (KNIRQFKKSQ) has biased composition (basic residues). Basic and acidic residues predominate over residues 72-81 (NKTDTEKSGE). The segment covering 83 to 107 (NDSDYSDYSDNSDDVDDLDDVDDLN) has biased composition (acidic residues).

This is an uncharacterized protein from Acanthamoeba polyphaga (Amoeba).